A 411-amino-acid chain; its full sequence is MATAGVAPASGIVDVNASSAIAVDKLPDEILGMRIKDDKEMEAHVVDGNSTEAGHVIVTTIGGKNGQPKQTISYMAERAVGQGSFGVVFQAKCLETGETVAIKKVLQDKRYKNRELQTMRLLDHPNVVTLKHCFFSTTEKDELYLNLVLEFVPETVHRVIRHYSKMNQRMPLIYVKLYSYQICRSLAYIHNCVGVSHRDIKPQNLLVNPHTHQLKLCDFGSAKVLVKGEPNISYICSRYYRAPELIFGATEYTSAIDIWSAGCVLGELLLGQPLFPGASGVDQLVEIIKVLGTPTREEIKCMNPNYTEFKFPQIKAHPWHKIFRKRMPPEAVDLVSRLLQYSPNLRSTALEALVHPFFDELRDPNTRLPNGRHLPPLFNFKANELKGVPAEMLVKLVPSHARKQCSLFASS.

Residues 74 to 358 (YMAERAVGQG…ALEALVHPFF (285 aa)) form the Protein kinase domain. ATP contacts are provided by residues 80 to 88 (VGQGSFGVV) and Lys103. The active-site Proton acceptor is the Asp199. The residue at position 234 (Tyr234) is a Phosphotyrosine.

Belongs to the protein kinase superfamily. CMGC Ser/Thr protein kinase family. GSK-3 subfamily. As to expression, absent in leaves and petioles while a moderate expression is seen in the stems, roots, and nodes.

The catalysed reaction is L-seryl-[protein] + ATP = O-phospho-L-seryl-[protein] + ADP + H(+). It catalyses the reaction L-threonyl-[protein] + ATP = O-phospho-L-threonyl-[protein] + ADP + H(+). This chain is Glycogen synthase kinase-3 homolog MsK-2 (MSK-2), found in Medicago sativa (Alfalfa).